Here is a 203-residue protein sequence, read N- to C-terminus: Recombination protein RecR (203 aa).

The segment at 56–71 (CEVCGNVSDADRCRIC) adopts a C4-type zinc-finger fold. The 101-residue stretch at 79-179 (SLVCVVEEPK…TVTRIASGLP (101 aa)) folds into the Toprim domain.

The protein belongs to the RecR family.

May play a role in DNA repair. It seems to be involved in an RecBC-independent recombinational process of DNA repair. It may act with RecF and RecO. The chain is Recombination protein RecR from Mycobacterium sp. (strain JLS).